Consider the following 198-residue polypeptide: Ribonuclease HII (198 aa).

The region spanning Gln-10–Ser-198 is the RNase H type-2 domain. A divalent metal cation is bound by residues Asp-16, Glu-17, and Asp-108.

It belongs to the RNase HII family. It depends on Mn(2+) as a cofactor. Mg(2+) serves as cofactor.

It localises to the cytoplasm. The enzyme catalyses Endonucleolytic cleavage to 5'-phosphomonoester.. Endonuclease that specifically degrades the RNA of RNA-DNA hybrids. The polypeptide is Ribonuclease HII (Shigella dysenteriae serotype 1 (strain Sd197)).